Reading from the N-terminus, the 288-residue chain is Cyclin-dependent kinase 2 homolog (288 aa).

The Protein kinase domain maps to 4 to 284 (YHGLEKIGEG…AKQALEHAYF (281 aa)). Residues 10–18 (IGEGTYGVV) and Lys-32 contribute to the ATP site. The residue at position 14 (Thr-14) is a Phosphothreonine. At Tyr-15 the chain carries Phosphotyrosine. Catalysis depends on Asp-125, which acts as the Proton acceptor. Thr-158 is modified (phosphothreonine).

Belongs to the protein kinase superfamily. CMGC Ser/Thr protein kinase family. CDC2/CDKX subfamily. May form a complex composed of at least the catalytic subunit CRK2 and a cyclin. Mg(2+) is required as a cofactor. Autophosphorylates in presence of cyclin cyc-1 but not in presence of cyclin cyc-3.

The protein resides in the cytoplasm. The enzyme catalyses L-seryl-[protein] + ATP = O-phospho-L-seryl-[protein] + ADP + H(+). The catalysed reaction is L-threonyl-[protein] + ATP = O-phospho-L-threonyl-[protein] + ADP + H(+). It carries out the reaction [DNA-directed RNA polymerase] + ATP = phospho-[DNA-directed RNA polymerase] + ADP + H(+). Phosphorylation at Thr-14 or Tyr-15 inactivates the enzyme, while phosphorylation at Thr-158 activates it. Activated by cyclin cyc-1 in vitro. Activated by cyclin cyc-3 in vitro. In terms of biological role, serine/threonine-protein kinase. Involved in the control of the cell cycle. Required for entry into S-phase and mitosis. Probable component of the kinase complex that phosphorylates the repetitive C-terminus of RNA polymerase II. In schizonts, phosphorylates ORC1 resulting in its dissociation from DNA, relocalization to the cytoplasm and likely its degradation. The protein is Cyclin-dependent kinase 2 homolog of Plasmodium falciparum (isolate 3D7).